A 187-amino-acid chain; its full sequence is Frataxin, mitochondrial (187 aa).

Belongs to the frataxin family. In terms of assembly, monomer. Oligomer. Interacts with NIFS1.

Its subcellular location is the mitochondrion. It catalyses the reaction 4 Fe(2+) + O2 + 4 H(+) = 4 Fe(3+) + 2 H2O. Functionally, promotes the biosynthesis of heme as well as the assembly and repair of iron-sulfur clusters by delivering Fe(2+) to proteins involved in these pathways. May play a role in the protection against iron-catalyzed oxidative stress through its ability to catalyze the oxidation of Fe(2+) to Fe(3+). May be able to store large amounts of the metal in the form of a ferrihydrite mineral by oligomerization. Binds to the mitochondrial cysteine desulfurase NIFS1 and increases its activity. The polypeptide is Frataxin, mitochondrial (FH) (Arabidopsis thaliana (Mouse-ear cress)).